Consider the following 640-residue polypeptide: MGCCQSRIDSKEIVSRCKARKRYLKHLVKARQTLSVSHALYLRSLRAVGSSLVHFSSKETPLHLHHNPPSPSPPPPPPPRPPPPPLSPGSETTTWTTTTTSSVLPPPPPPPPPPPPPSSTWDFWDPFIPPPPSSSEEEWEEETTTATRTATGTGSDAAVTTAPTTATPQASSVVSGFSKDTMTTTTTGSELAVVVSRNGKDLMEIIKEVDEYFLKAADSGAPLSSLLEISTSITDFSGHSKSGKMYSSSNYECNLNPTSFWTRGFAPSKLSEYRNAGGVIGGNCIVGSHSSTVDRLYAWEKKLYQEVKYAESIKMDHEKKVEQVRRLEMKRAEYVKTEKAKKDVEKLESQLSVSSQAIQSASNEIIKLRETELYPQLVELVKGLMCMWRSMYESHQVQTHIVQQLKYLNTIPSTEPTSELHRQSTLQLELEVQQWHHSFCNLVKAQRDYIQSLTGWLRLSLFQFSKNPLVRSSYESKIYSFCEEWHLAIDRIPDKVASEGIKSFLTAVHGIVAQQADEHKQKKRTESMLKDFEKKSASLRALESKYSPYSVPESRKKNPVIEKRVKVEMLKGKAEEEKSKHEKSVSVTRAMTLNNLQMGFPHVFQAMVGFSSVCMQAFESVYNQAKSIGEDQEEVKRLLP.

Residues 60 to 175 form a disordered region; the sequence is TPLHLHHNPP…ATPQASSVVS (116 aa). The span at 68–87 shows a compositional bias: pro residues; that stretch reads PPSPSPPPPPPPRPPPPPLS. A compositionally biased stretch (low complexity) spans 88–103; that stretch reads PGSETTTWTTTTTSSV. Residues 104–118 are compositionally biased toward pro residues; it reads LPPPPPPPPPPPPPS. Positions 144–173 are enriched in low complexity; sequence TTATRTATGTGSDAAVTTAPTTATPQASSV. A coiled-coil region spans residues 336–371; that stretch reads KTEKAKKDVEKLESQLSVSSQAIQSASNEIIKLRET.

In terms of tissue distribution, expressed in the root tip of primary and lateral roots, specifically in the meristematic region, including the quiescent center and lateral root cap cells.

It is found in the nucleus. Required for the coordination of cell differentiation and cell elongation in the root tip. Required for the coordination of cell processes necessary for correct root growth in response to phosphate starvation, through the modulation of the auxin transporter protein PIN7. The protein is Protein ALTERED PHOSPHATE STARVATION RESPONSE 1 of Arabidopsis thaliana (Mouse-ear cress).